Here is a 495-residue protein sequence, read N- to C-terminus: Aspartyl/glutamyl-tRNA(Asn/Gln) amidotransferase subunit B (495 aa).

Belongs to the GatB/GatE family. GatB subfamily. Heterotrimer of A, B and C subunits.

The enzyme catalyses L-glutamyl-tRNA(Gln) + L-glutamine + ATP + H2O = L-glutaminyl-tRNA(Gln) + L-glutamate + ADP + phosphate + H(+). It catalyses the reaction L-aspartyl-tRNA(Asn) + L-glutamine + ATP + H2O = L-asparaginyl-tRNA(Asn) + L-glutamate + ADP + phosphate + 2 H(+). Functionally, allows the formation of correctly charged Asn-tRNA(Asn) or Gln-tRNA(Gln) through the transamidation of misacylated Asp-tRNA(Asn) or Glu-tRNA(Gln) in organisms which lack either or both of asparaginyl-tRNA or glutaminyl-tRNA synthetases. The reaction takes place in the presence of glutamine and ATP through an activated phospho-Asp-tRNA(Asn) or phospho-Glu-tRNA(Gln). The polypeptide is Aspartyl/glutamyl-tRNA(Asn/Gln) amidotransferase subunit B (Beijerinckia indica subsp. indica (strain ATCC 9039 / DSM 1715 / NCIMB 8712)).